Consider the following 185-residue polypeptide: MISSNDFRTGTSIELDGSVWRVVEFLHVKPGKGSAFVRTKLKNAQTGSVVEKTFRAGETVPQAILDKRTMQHTYKEGEQFVFMDMETYEEVRLTEAQIGDRVKYLMEEMEVNVLFWNSQVIDVELPNTVVLEVTETDPGVKGDTATGGTKPAIVSTGAQVNVPLFISIGERIKIDTRTDTYLGRE.

The protein belongs to the elongation factor P family.

It is found in the cytoplasm. Its pathway is protein biosynthesis; polypeptide chain elongation. Involved in peptide bond synthesis. Stimulates efficient translation and peptide-bond synthesis on native or reconstituted 70S ribosomes in vitro. Probably functions indirectly by altering the affinity of the ribosome for aminoacyl-tRNA, thus increasing their reactivity as acceptors for peptidyl transferase. This Picosynechococcus sp. (strain ATCC 27264 / PCC 7002 / PR-6) (Agmenellum quadruplicatum) protein is Elongation factor P.